Reading from the N-terminus, the 447-residue chain is MTEADSSVLQIWGGHPLQGHVKISGAKNSALVIMAGALLCSGDCRIRNVPLLADVERMGEVISALGVRLTRQADIIDINASEIKTSKAPYELVTQLRASFFAIGAILARLGVAQMPLPGGCAIGARPVDLHVRGLQAMGAEVQIEHGICNAYVPGSGGRLKGAKIYLDTPSVGATETLMMAATLADGETILENAAREPEVVDLANFCKAMGANIQGAGTSTITIVGVPKLHSVDYSIIPDRIEAGTFLVAGAITRSEITLSSVVPEHLIPLIAKLRDIGVTIIEESPDCLRILPAEILKATDIDTLPHPGFPTDMQAPFMALLTLAEGDSIINESVFENRLRHASELNRLGADIRVKGNTAFVRGVPLLSGAPVIGTDLRASAALVIAGLAAEGKTTIQGLHHLDRGYDQIDVKLQQLGAKILRVREEPANAEVAVNNNVSPASIST.

Lys-27–Asn-28 contributes to the phosphoenolpyruvate binding site. A UDP-N-acetyl-alpha-D-glucosamine-binding site is contributed by Arg-97. The Proton donor role is filled by Cys-121. Cys-121 bears the 2-(S-cysteinyl)pyruvic acid O-phosphothioketal mark. Residues Arg-126–Leu-130, Asp-314, and Val-336 contribute to the UDP-N-acetyl-alpha-D-glucosamine site.

It belongs to the EPSP synthase family. MurA subfamily.

The protein resides in the cytoplasm. It carries out the reaction phosphoenolpyruvate + UDP-N-acetyl-alpha-D-glucosamine = UDP-N-acetyl-3-O-(1-carboxyvinyl)-alpha-D-glucosamine + phosphate. It functions in the pathway cell wall biogenesis; peptidoglycan biosynthesis. Its function is as follows. Cell wall formation. Adds enolpyruvyl to UDP-N-acetylglucosamine. The protein is UDP-N-acetylglucosamine 1-carboxyvinyltransferase of Nostoc sp. (strain PCC 7120 / SAG 25.82 / UTEX 2576).